Here is a 298-residue protein sequence, read N- to C-terminus: Glycine--tRNA ligase alpha subunit (298 aa).

Belongs to the class-II aminoacyl-tRNA synthetase family. As to quaternary structure, tetramer of two alpha and two beta subunits.

It is found in the cytoplasm. The catalysed reaction is tRNA(Gly) + glycine + ATP = glycyl-tRNA(Gly) + AMP + diphosphate. The chain is Glycine--tRNA ligase alpha subunit from Helicobacter pylori (strain G27).